A 162-amino-acid chain; its full sequence is MRIGLYPGTFDPLTLGHLDIIQRAMALVDRLVIGVAINRDKGPLFSLEERVRMVESECRAIAANGGEIVVHPFENLLIDCARDVGASVILRGLRAVADFEYEFQMVGMNRALDAGIETVFLMADARRQAIASKLVKEIARLGGDVSSFVTPDVGAALMAKYR.

Substrate is bound at residue threonine 9. ATP is bound by residues 9-10 (TF) and histidine 17. Lysine 41, leucine 77, and arginine 91 together coordinate substrate. Residues 92–94 (GLR), glutamate 102, and 127–133 (RQAIASK) each bind ATP.

This sequence belongs to the bacterial CoaD family. Homohexamer. Mg(2+) is required as a cofactor.

Its subcellular location is the cytoplasm. The catalysed reaction is (R)-4'-phosphopantetheine + ATP + H(+) = 3'-dephospho-CoA + diphosphate. Its pathway is cofactor biosynthesis; coenzyme A biosynthesis; CoA from (R)-pantothenate: step 4/5. Reversibly transfers an adenylyl group from ATP to 4'-phosphopantetheine, yielding dephospho-CoA (dPCoA) and pyrophosphate. The protein is Phosphopantetheine adenylyltransferase of Cereibacter sphaeroides (strain ATCC 17025 / ATH 2.4.3) (Rhodobacter sphaeroides).